A 314-amino-acid polypeptide reads, in one-letter code: MDADKDNIKQACDERSAEMDDMRGEQSMGLVHEIMSENKELDEEIKKLEAELQSDAREFQIKENVPEKKLKLTSVESPKDGCHFSNSSCSFQVSSQILYELQEGQALITFEKEEVAQNVISMGNHVVQMEGTPVKVSAHPVPLNTGVRFQVHVDISKMKINVTGIPDELSEEQTRDKLELSFCKSRNGGGEVESVDYDRKSRSAVITFVETGVVDKILKKKTYPLYMNQKCHSVAVSPCIERCLEKYQVFSAVSKKTVLLTGLEGIPVDEETGEDLLNIHFQRKNNGGGEVEVVKCSLDQSFAAYFKEEARETI.

Residues 1 to 24 (MDADKDNIKQACDERSAEMDDMRG) form a disordered region. Ser16 is subject to Phosphoserine. Residues 31–65 (VHEIMSENKELDEEIKKLEAELQSDAREFQIKENV) are a coiled coil. 2 NID domains span residues 104–193 (GQAL…GEVE) and 202–293 (RSAV…EVEV).

The protein belongs to the NMI family. Interacts with MYCN and MYC, as well as with other transcription factors with a Zip, HLH or a HLH-Zip motif. Interacts with all STAT proteins except STAT2. Interacts with IRF7, the interaction is direct and leads to the inhibition of IRF7-mediated type I IFN production. Interacts (via coiled-coil domain) with TRIM21 (via the SPRY domain); the interaction leads to 'Lys-63'-linked ubiquitination of NMI. Interacts with IFI35; the interaction is direct and is facilitated by TRIM21. Interacts with TLR4; the interaction is direct and leads to NF-kappa-B activation. In terms of processing, may be ubiquitinated. As to expression, expressed in macrophages.

The protein localises to the cytoplasm. It localises to the nucleus. The protein resides in the secreted. Functionally, acts as a signaling pathway regulator involved in innate immune system response. In response to interleukin 2/IL2 and interferon IFN-gamma/IFNG, interacts with signal transducer and activator of transcription/STAT which activate the transcription of downstream genes involved in a multitude of signals for development and homeostasis. Enhances the recruitment of CBP/p300 coactivators to STAT1 and STAT5, resulting in increased STAT1- and STAT5-dependent transcription. In response to interferon IFN-alpha, associates in a complex with transcriptional regulator IFI35 to regulate immune response; the complex formation prevents proteasome-mediated degradation of IFI35. In complex with IFI35, negatively regulates nuclear factor NF-kappa-B signaling by inhibiting the nuclear translocation, activation and transcription of NF-kappa-B subunit p65/RELA, resulting in the inhibition of endothelial cell proliferation, migration and re-endothelialization of injured arteries. Negatively regulates virus-triggered type I interferon/IFN production by inducing proteosome-dependent degradation of IRF7, a transcriptional regulator of type I IFN, thereby interfering with cellular antiviral responses. Beside its role as an intracellular signaling pathway regulator, also functions extracellularly as damage-associated molecular patterns (DAMPs) to promote inflammation, when actively released by macrophage to the extracellular space during cell injury or pathogen invasion. Macrophage-secreted NMI activates NF-kappa-B signaling in adjacent macrophages through Toll-like receptor 4/TLR4 binding and activation, thereby inducing NF-kappa-B translocation from the cytoplasm into the nucleus which promotes the release of pro-inflammatory cytokines. The sequence is that of N-myc-interactor from Mus musculus (Mouse).